Consider the following 148-residue polypeptide: Urease accessory protein UreE (148 aa).

The protein belongs to the UreE family.

The protein localises to the cytoplasm. Involved in urease metallocenter assembly. Binds nickel. Probably functions as a nickel donor during metallocenter assembly. The polypeptide is Urease accessory protein UreE (Bacillus sp. (strain TB-90)).